We begin with the raw amino-acid sequence, 31 residues long: Cycloviolacin-O19 (31 aa).

Positions 1–31 (GTLPCGESCVWIPCISSVVGCSCKSKVCYKD) form a cross-link, cyclopeptide (Gly-Asp). 3 disulfide bridges follow: Cys5/Cys21, Cys9/Cys23, and Cys14/Cys28.

In terms of processing, this is a cyclic peptide. In terms of tissue distribution, expressed in petioles and runners but not in leaves, petals and roots (at protein level).

Functionally, probably participates in a plant defense mechanism. In Viola odorata (Sweet violet), this protein is Cycloviolacin-O19.